The primary structure comprises 427 residues: Homoserine O-acetyltransferase FUB5 (427 aa).

Residues 1-13 (MTTTTTAPALPTP) are compositionally biased toward low complexity. The segment at 1 to 35 (MTTTTTAPALPTPIHDGLGNGTTYERSIPRPVNPF) is disordered. Positions 77–400 (NVMIICHALS…VSDDGHDAFL (324 aa)) constitute an AB hydrolase-1 domain. Catalysis depends on S175, which acts as the Nucleophile. The tract at residues 260-297 (RFGRDTGNKKKAKNKGSETLPSNSTPIHSQGGADETPV) is disordered. Residues 276 to 287 (SETLPSNSTPIH) show a composition bias toward polar residues. Catalysis depends on residues D367 and H396.

It belongs to the AB hydrolase superfamily. MetX family.

It catalyses the reaction L-homoserine + acetyl-CoA = O-acetyl-L-homoserine + CoA. It participates in mycotoxin biosynthesis. Functionally, homoserine O-acetyltransferase; part of the gene cluster that mediates the biosynthesis of fusaric acid, a mycotoxin with low to moderate toxicity to animals and humans, but with high phytotoxic properties. L-aspartate is suggested as fusaric acid amino acid precursor that is activated and further processed to O-acetyl-L-homoserine by cluster enzymes aspartate kinase FUB3 and homoserine O-acetyltransferase FUB5, as well as enzymes of the primary metabolism. The polyketide synthase (PKS) FUB1 generates the triketide trans-2-hexenal which is presumptively released by the hydrolase FUB4 and linked to the NRPS-bound amino acid precursor by NAD(P)-dependent dehydrogenase FUB6. FUB1, FUB4, and the non-canonical NRPS Fub8 may form an enzyme complex. Further processing of the NRPS-bound intermediate might be carried out by FUB6 and the sulfhydrylase FUB7, enabling a spontaneous electrocyclization to close the carbon backbone of fusaric acid. Dihydrofusaric acid is likely to be released via reduction by the thioester reductase (TR) domain of FUB8 whereupon the final oxidation to fusaric acid may (also) be performed by the FMN-dependent dehydrogenase FUB9. The chain is Homoserine O-acetyltransferase FUB5 from Gibberella fujikuroi (strain CBS 195.34 / IMI 58289 / NRRL A-6831) (Bakanae and foot rot disease fungus).